We begin with the raw amino-acid sequence, 180 residues long: Large ribosomal subunit protein uL6 (180 aa).

It belongs to the universal ribosomal protein uL6 family. In terms of assembly, part of the 50S ribosomal subunit.

This protein binds to the 23S rRNA, and is important in its secondary structure. It is located near the subunit interface in the base of the L7/L12 stalk, and near the tRNA binding site of the peptidyltransferase center. The polypeptide is Large ribosomal subunit protein uL6 (Mesoplasma florum (strain ATCC 33453 / NBRC 100688 / NCTC 11704 / L1) (Acholeplasma florum)).